The following is a 167-amino-acid chain: Phospholipase A2 (167 aa).

Positions Met1 to Gly18 are cleaved as a signal peptide. The propeptide occupies Trp19–Arg33. Ca(2+) contacts are provided by Trp41, Gly43, and Gly45. 5 disulfides stabilise this stretch: Cys42–Cys64, Cys63–Cys103, Cys70–Cys96, Cys94–Cys128, and Cys138–Cys146. N-linked (GlcNAc...) asparagine glycosylation occurs at Asn46. His67 is a catalytic residue. Asp68 serves as a coordination point for Ca(2+). The active site involves Asp97.

Belongs to the phospholipase A2 family. Group III subfamily. Requires Ca(2+) as cofactor. Post-translationally, N-glycosylated; contains mannose, N-acetylglucosamine and fucose alphal-6 and/or alphal-3 linked to the innermost N-acetylglucosamine. As to expression, expressed by the venom gland.

The protein resides in the secreted. The enzyme catalyses a 1,2-diacyl-sn-glycero-3-phosphocholine + H2O = a 1-acyl-sn-glycero-3-phosphocholine + a fatty acid + H(+). Its function is as follows. In vivo, intraplantar injection in mice cause spontaneous pain behaviors and paw swelling. PLA2 catalyzes the calcium-dependent hydrolysis of the 2-acyl groups in 3-sn-phosphoglycerides. This Apis mellifera (Honeybee) protein is Phospholipase A2.